The chain runs to 98 residues: Small ribosomal subunit protein uS19 (98 aa).

This sequence belongs to the universal ribosomal protein uS19 family.

In terms of biological role, protein S19 forms a complex with S13 that binds strongly to the 16S ribosomal RNA. In Chlorobaculum tepidum (strain ATCC 49652 / DSM 12025 / NBRC 103806 / TLS) (Chlorobium tepidum), this protein is Small ribosomal subunit protein uS19.